The sequence spans 130 residues: Seminal plasma protein pB1 (130 aa).

The signal sequence occupies residues 1-25; sequence MAPRLGIFLLWAGVSVFLPLDPVNG. Fibronectin type-II domains are found at residues 39–83 and 84–130; these read TSDD…YCRS and TDYA…WRYC. 4 cysteine pairs are disulfide-bonded: Cys44/Cys68, Cys58/Cys81, Cys89/Cys115, and Cys103/Cys130.

It belongs to the seminal plasma protein family. In terms of tissue distribution, component of seminal plasma.

The protein resides in the secreted. Functionally, may form a complex with spermadhesin AQN-1 which possesses phosphorylcholine-binding activity. The protein is Seminal plasma protein pB1 of Sus scrofa (Pig).